Here is an 86-residue protein sequence, read N- to C-terminus: Small ribosomal subunit protein uS15 (86 aa).

The segment covering 1–10 (MSIDTQSIIE) has biased composition (polar residues). Residues 1–21 (MSIDTQSIIENNKRSAHDTGS) form a disordered region.

The protein belongs to the universal ribosomal protein uS15 family. In terms of assembly, part of the 30S ribosomal subunit. Forms a bridge to the 50S subunit in the 70S ribosome, contacting the 23S rRNA.

One of the primary rRNA binding proteins, it binds directly to 16S rRNA where it helps nucleate assembly of the platform of the 30S subunit by binding and bridging several RNA helices of the 16S rRNA. Functionally, forms an intersubunit bridge (bridge B4) with the 23S rRNA of the 50S subunit in the ribosome. This Xylella fastidiosa (strain 9a5c) protein is Small ribosomal subunit protein uS15.